We begin with the raw amino-acid sequence, 554 residues long: Solute carrier family 22 member 2 (554 aa).

Residues 1-21 are Cytoplasmic-facing; the sequence is MPTVDDILEQVGHFHFFQKQT. Residues 22–42 traverse the membrane as a helical segment; the sequence is FFLLALISAAFTPIYVGIVFL. Topologically, residues 43–149 are extracellular; the sequence is GFTPDHRCRS…LVCARSWMLD (107 aa). The N-linked (GlcNAc...) asparagine glycan is linked to asparagine 71. A helical membrane pass occupies residues 150–170; that stretch reads LFQSAVNIGFFIGSVGIGYLA. Over 171-176 the chain is Cytoplasmic; sequence DRFGRK. Residues 177-197 form a helical membrane-spanning segment; that stretch reads LCLLVTILINAAAGVLMAVSP. Asparagine 198 carries an N-linked (GlcNAc...) asparagine glycan. The Extracellular portion of the chain corresponds to 198–209; it reads NYTWMLIFRLIQ. A helical membrane pass occupies residues 210-230; that stretch reads GLVSKAGWLIGYILITEFVGL. At 231–237 the chain is on the cytoplasmic side; that stretch reads NYRRTVG. A helical transmembrane segment spans residues 238–258; the sequence is ILYQVAFTVGLLVLAGVAYAL. Over 259–262 the chain is Extracellular; that stretch reads PRWR. A helical membrane pass occupies residues 263–283; the sequence is WLQLTVTLPYFCFLLYYWCIP. The Proline-rich sequence motif lies at 283–287; sequence PESPR. The Cytoplasmic segment spans residues 284–348; it reads ESPRWLISQN…RTPQIRKHTC (65 aa). A helical transmembrane segment spans residues 349-369; it reads ILMYNWFTSSVLYQGLIMHLG. Topologically, residues 370–374 are extracellular; it reads LAGGD. The helical transmembrane segment at 375–395 threads the bilayer; sequence IYLDFFYSALVEFPAAFLIIA. Topologically, residues 396-403 are cytoplasmic; sequence TIDRVGRR. The helical transmembrane segment at 404-424 threads the bilayer; sequence YPWAVSNMVAGAACLASVFVP. Over 425 to 427 the chain is Extracellular; it reads DDL. A helical transmembrane segment spans residues 428–450; it reads QGLRITVACLGRMGITMAYEMVC. The Cytoplasmic portion of the chain corresponds to 451–463; sequence LVNAELYPTFIRN. A helical transmembrane segment spans residues 464–484; it reads LGVLVCSSLCDVGGIVTPFLV. Residues 485-493 lie on the Extracellular side of the membrane; it reads YRLTAIWLQ. Residues 494–514 form a helical membrane-spanning segment; the sequence is LPLVVFAVVGLVAGGLVLMLP. The Cytoplasmic segment spans residues 515–554; sequence ETKGRTLPETIEEAENLQRPRKNREKVIYVHVRKADGPLT.

The protein belongs to the major facilitator (TC 2.A.1) superfamily. Organic cation transporter (TC 2.A.1.19) family. In terms of processing, tyrosine phosphorylated. As to expression, expressed in kidney.

The protein resides in the basolateral cell membrane. It localises to the basal cell membrane. The enzyme catalyses (R)-noradrenaline(out) = (R)-noradrenaline(in). The catalysed reaction is (R)-adrenaline(out) = (R)-adrenaline(in). It catalyses the reaction serotonin(out) = serotonin(in). It carries out the reaction dopamine(out) = dopamine(in). The enzyme catalyses histamine(out) = histamine(in). The catalysed reaction is thiamine(in) = thiamine(out). It catalyses the reaction creatinine(in) = creatinine(out). It carries out the reaction 1-methylnicotinamide(out) = 1-methylnicotinamide(in). The enzyme catalyses guanidine(out) = guanidine(in). The catalysed reaction is choline(out) = choline(in). It catalyses the reaction agmatine(out) = agmatine(in). It carries out the reaction putrescine(out) = putrescine(in). The enzyme catalyses spermidine(in) = spermidine(out). The catalysed reaction is tyramine(in) = tyramine(out). It catalyses the reaction L-histidyl-L-proline diketopiperazine(in) = L-histidyl-L-proline diketopiperazine(out). It carries out the reaction (R)-salsolinol(in) = (R)-salsolinol(out). The enzyme catalyses N-methyl-(R)-salsolinol(in) = N-methyl-(R)-salsolinol(out). The catalysed reaction is acetylcholine(in) = acetylcholine(out). It catalyses the reaction prostaglandin F2alpha(out) = prostaglandin F2alpha(in). It carries out the reaction prostaglandin E2(out) = prostaglandin E2(in). Tyrosine phosphorylation of the transporter leads to activation of the transport activity. Inhibited by cGMP, most likely through a cGMP-binding protein that interacts with OCT2. Functionally, electrogenic voltage-dependent transporter that mediates the transport of a variety of organic cations such as endogenous bioactive amines, cationic drugs and xenobiotics. Functions as a Na(+)-independent, bidirectional uniporter. Cation cellular uptake or release is driven by the electrochemical potential, i.e. membrane potential and concentration gradient. However, may also engage electroneutral cation exchange when saturating concentrations of cation substrates are reached. Predominantly expressed at the basolateral membrane of hepatocytes and proximal tubules and involved in the uptake and disposition of cationic compounds by hepatic and renal clearance from the blood flow. Implicated in monoamine neurotransmitters uptake such as histamine, dopamine, adrenaline/epinephrine, noradrenaline/norepinephrine, serotonin and tyramine, thereby supporting a physiological role in the central nervous system by regulating interstitial concentrations of neurotransmitters. Also capable of transporting dopaminergic neuromodulators cyclo(his-pro), salsolinol and N-methyl-salsolinol, thereby involved in the maintenance of dopaminergic cell integrity in the central nervous system. Mediates the bidirectional transport of acetylcholine (ACh) at the apical membrane of ciliated cell in airway epithelium, thereby playing a role in luminal release of ACh from bronchial epithelium. Also transports guanidine and endogenous monoamines such as vitamin B1/thiamine, creatinine and N-1-methylnicotinamide (NMN). Mediates the uptake and efflux of quaternary ammonium compound choline. Mediates the bidirectional transport of polyamine agmatine and the uptake of polyamines putrescine and spermidine. Able to transport non-amine endogenous compounds such as prostaglandin E2 (PGE2) and prostaglandin F2-alpha (PGF2-alpha). Also involved in the uptake of xenobiotic 4-(4-(dimethylamino)styryl)-N-methylpyridinium (ASP). May contribute to regulate the transport of organic compounds in testis across the blood-testis-barrier. The polypeptide is Solute carrier family 22 member 2 (SLC22A2) (Oryctolagus cuniculus (Rabbit)).